Consider the following 614-residue polypeptide: 1-deoxy-D-xylulose-5-phosphate synthase (614 aa).

Thiamine diphosphate is bound by residues His-74 and 115 to 117 (AHS). Residue Asp-146 participates in Mg(2+) binding. Thiamine diphosphate contacts are provided by residues 147–148 (GA), Asn-175, Tyr-282, and Glu-363. Residue Asn-175 coordinates Mg(2+).

This sequence belongs to the transketolase family. DXPS subfamily. Homodimer. It depends on Mg(2+) as a cofactor. Thiamine diphosphate serves as cofactor.

The catalysed reaction is D-glyceraldehyde 3-phosphate + pyruvate + H(+) = 1-deoxy-D-xylulose 5-phosphate + CO2. The protein operates within metabolic intermediate biosynthesis; 1-deoxy-D-xylulose 5-phosphate biosynthesis; 1-deoxy-D-xylulose 5-phosphate from D-glyceraldehyde 3-phosphate and pyruvate: step 1/1. Its function is as follows. Catalyzes the acyloin condensation reaction between C atoms 2 and 3 of pyruvate and glyceraldehyde 3-phosphate to yield 1-deoxy-D-xylulose-5-phosphate (DXP). In Nitrosospira multiformis (strain ATCC 25196 / NCIMB 11849 / C 71), this protein is 1-deoxy-D-xylulose-5-phosphate synthase.